Consider the following 245-residue polypeptide: Uroporphyrinogen-III C-methyltransferase (245 aa).

Residues Pro12, 87–89, 117–118, Met168, Ala197, and Ala225 each bind S-adenosyl-L-homocysteine; these read GGD and TA.

Belongs to the precorrin methyltransferase family.

The catalysed reaction is uroporphyrinogen III + 2 S-adenosyl-L-methionine = precorrin-2 + 2 S-adenosyl-L-homocysteine + H(+). It participates in cofactor biosynthesis; adenosylcobalamin biosynthesis; precorrin-2 from uroporphyrinogen III: step 1/1. It functions in the pathway porphyrin-containing compound metabolism; siroheme biosynthesis; precorrin-2 from uroporphyrinogen III: step 1/1. Functionally, catalyzes the two successive C-2 and C-7 methylation reactions involved in the conversion of uroporphyrinogen III to precorrin-2 via the intermediate formation of precorrin-1. It is a step in the biosynthesis of both cobalamin (vitamin B12) and siroheme. The chain is Uroporphyrinogen-III C-methyltransferase (cobA) from Pseudomonas aeruginosa (strain ATCC 15692 / DSM 22644 / CIP 104116 / JCM 14847 / LMG 12228 / 1C / PRS 101 / PAO1).